A 34-amino-acid chain; its full sequence is MNFEVLFQLTALIFVVAAGPLVIVLLASRSNSGL.

Residues 5 to 25 (VLFQLTALIFVVAAGPLVIVL) traverse the membrane as a helical segment.

It belongs to the Psb30/Ycf12 family. As to quaternary structure, PSII is composed of 1 copy each of membrane proteins PsbA, PsbB, PsbC, PsbD, PsbE, PsbF, PsbH, PsbI, PsbJ, PsbK, PsbL, PsbM, PsbT, PsbX, PsbY, PsbZ, Psb30/Ycf12, peripheral proteins of the oxygen-evolving complex and a large number of cofactors. It forms dimeric complexes.

It localises to the plastid. The protein localises to the chloroplast thylakoid membrane. Functionally, a core subunit of photosystem II (PSII), probably helps stabilize the reaction center. In Tupiella akineta (Green alga), this protein is Photosystem II reaction center protein Psb30.